Reading from the N-terminus, the 263-residue chain is Ribonuclease HII (263 aa).

Residues 74-262 (EHVAGLDEVG…VQETAATRQT (189 aa)) form the RNase H type-2 domain. D80, E81, and D172 together coordinate a divalent metal cation.

Belongs to the RNase HII family. Requires Mn(2+) as cofactor. Mg(2+) serves as cofactor.

It localises to the cytoplasm. The enzyme catalyses Endonucleolytic cleavage to 5'-phosphomonoester.. In terms of biological role, endonuclease that specifically degrades the RNA of RNA-DNA hybrids. The chain is Ribonuclease HII (rnhB) from Halalkalibacterium halodurans (strain ATCC BAA-125 / DSM 18197 / FERM 7344 / JCM 9153 / C-125) (Bacillus halodurans).